The chain runs to 520 residues: GMP synthase [glutamine-hydrolyzing] (520 aa).

Positions 12–205 (KIIVLDYGSQ…AIFICGARGD (194 aa)) constitute a Glutamine amidotransferase type-1 domain. Cysteine 89 functions as the Nucleophile in the catalytic mechanism. Active-site residues include histidine 179 and glutamate 181. A GMPS ATP-PPase domain is found at 206 to 395 (WSMDNFIDMQ…LGMPENIVWR (190 aa)). Residue 233–239 (SGGVDSS) participates in ATP binding.

In terms of assembly, homodimer.

The catalysed reaction is XMP + L-glutamine + ATP + H2O = GMP + L-glutamate + AMP + diphosphate + 2 H(+). It functions in the pathway purine metabolism; GMP biosynthesis; GMP from XMP (L-Gln route): step 1/1. Its function is as follows. Catalyzes the synthesis of GMP from XMP. In Streptococcus uberis (strain ATCC BAA-854 / 0140J), this protein is GMP synthase [glutamine-hydrolyzing].